A 99-amino-acid chain; its full sequence is NADH-quinone oxidoreductase subunit K (99 aa).

3 helical membrane-spanning segments follow: residues 3–23 (VTAY…GVLI), 28–48 (IVVF…LVAF), and 59–79 (IAAF…LAII).

It belongs to the complex I subunit 4L family. In terms of assembly, NDH-1 is composed of 14 different subunits. Subunits NuoA, H, J, K, L, M, N constitute the membrane sector of the complex.

Its subcellular location is the cell membrane. The enzyme catalyses a quinone + NADH + 5 H(+)(in) = a quinol + NAD(+) + 4 H(+)(out). In terms of biological role, NDH-1 shuttles electrons from NADH, via FMN and iron-sulfur (Fe-S) centers, to quinones in the respiratory chain. The immediate electron acceptor for the enzyme in this species is believed to be a menaquinone. Couples the redox reaction to proton translocation (for every two electrons transferred, four hydrogen ions are translocated across the cytoplasmic membrane), and thus conserves the redox energy in a proton gradient. This chain is NADH-quinone oxidoreductase subunit K, found in Nocardioides sp. (strain ATCC BAA-499 / JS614).